The chain runs to 518 residues: Subtilisin-like protease 1 (518 aa).

Positions Met-1–Ala-19 are cleaved as a signal peptide. The propeptide occupies Ala-20–His-116. One can recognise an Inhibitor I9 domain in the interval Ser-34–Val-115. The Peptidase S8 domain maps to Ser-126–Lys-400. Catalysis depends on charge relay system residues Asp-158 and His-190. The disordered stretch occupies residues Gly-175–Met-198. Residues Asn-233 and Asn-251 are each glycosylated (N-linked (GlcNAc...) asparagine). A compositionally biased stretch (polar residues) spans Asn-282 to Ser-294. The interval Asn-282 to Ser-312 is disordered. Ser-345 acts as the Charge relay system in catalysis. Over residues Thr-378 to Ile-394 the composition is skewed to polar residues. Positions Thr-378–Phe-496 are disordered. Composition is skewed to pro residues over residues Asn-405–Pro-470 and Ala-478–Pro-487.

Belongs to the peptidase S8 family.

It localises to the secreted. In terms of biological role, secreted subtilisin-like serine protease with keratinolytic activity that contributes to pathogenicity. The sequence is that of Subtilisin-like protease 1 (SUB1) from Trichophyton verrucosum (strain HKI 0517).